The primary structure comprises 333 residues: tRNA N6-adenosine threonylcarbamoyltransferase (333 aa).

Fe cation contacts are provided by His-111 and His-115. Substrate is bound by residues 134–138 (VVSGG), Asp-167, Gly-180, Asp-184, and Asn-273. Fe cation is bound at residue Asp-302.

This sequence belongs to the KAE1 / TsaD family. The cofactor is Fe(2+).

Its subcellular location is the cytoplasm. The enzyme catalyses L-threonylcarbamoyladenylate + adenosine(37) in tRNA = N(6)-L-threonylcarbamoyladenosine(37) in tRNA + AMP + H(+). In terms of biological role, required for the formation of a threonylcarbamoyl group on adenosine at position 37 (t(6)A37) in tRNAs that read codons beginning with adenine. Is involved in the transfer of the threonylcarbamoyl moiety of threonylcarbamoyl-AMP (TC-AMP) to the N6 group of A37, together with TsaE and TsaB. TsaD likely plays a direct catalytic role in this reaction. The protein is tRNA N6-adenosine threonylcarbamoyltransferase of Anaeromyxobacter sp. (strain Fw109-5).